A 491-amino-acid chain; its full sequence is Ketol-acid reductoisomerase (NADP(+)) (491 aa).

A KARI N-terminal Rossmann domain is found at 15–208 (AQLGKCRFMG…GGHRAGVLES (194 aa)). Residues 45–48 (CGAQ), Arg-68, Arg-76, Ser-78, and 108–110 (DKQ) contribute to the NADP(+) site. His-132 is an active-site residue. Gly-158 is an NADP(+) binding site. KARI C-terminal knotted domains follow at residues 209-344 (SFVA…TAPQ) and 345-484 (YEGK…MTDM). Positions 217, 221, 389, and 393 each coordinate Mg(2+). Ser-414 provides a ligand contact to substrate.

Belongs to the ketol-acid reductoisomerase family. Requires Mg(2+) as cofactor.

The enzyme catalyses (2R)-2,3-dihydroxy-3-methylbutanoate + NADP(+) = (2S)-2-acetolactate + NADPH + H(+). It carries out the reaction (2R,3R)-2,3-dihydroxy-3-methylpentanoate + NADP(+) = (S)-2-ethyl-2-hydroxy-3-oxobutanoate + NADPH + H(+). Its pathway is amino-acid biosynthesis; L-isoleucine biosynthesis; L-isoleucine from 2-oxobutanoate: step 2/4. It participates in amino-acid biosynthesis; L-valine biosynthesis; L-valine from pyruvate: step 2/4. Its function is as follows. Involved in the biosynthesis of branched-chain amino acids (BCAA). Catalyzes an alkyl-migration followed by a ketol-acid reduction of (S)-2-acetolactate (S2AL) to yield (R)-2,3-dihydroxy-isovalerate. In the isomerase reaction, S2AL is rearranged via a Mg-dependent methyl migration to produce 3-hydroxy-3-methyl-2-ketobutyrate (HMKB). In the reductase reaction, this 2-ketoacid undergoes a metal-dependent reduction by NADPH to yield (R)-2,3-dihydroxy-isovalerate. This is Ketol-acid reductoisomerase (NADP(+)) from Escherichia coli O7:K1 (strain IAI39 / ExPEC).